Reading from the N-terminus, the 734-residue chain is Fc receptor-like protein 3 (734 aa).

The first 17 residues, 1–17 (MLLWLLLLILTPGREQS), serve as a signal peptide directing secretion. The Extracellular portion of the chain corresponds to 18–573 (GVAPKAVLLL…GTSRNRTGLT (556 aa)). 6 consecutive Ig-like C2-type domains span residues 21 to 98 (PKAV…VEFS), 99 to 182 (PDWL…KPLN), 192 to 270 (PVLR…HSIK), 284 to 369 (PVSN…PILS), 383 to 470 (PVLT…LRVT), and 476 to 563 (PVLT…LNVT). Cystine bridges form between Cys-44-Cys-82, Cys-120-Cys-163, Cys-211-Cys-260, Cys-309-Cys-358, Cys-404-Cys-451, and Cys-497-Cys-544. Asn-561 is a glycosylation site (N-linked (GlcNAc...) asparagine). The chain crosses the membrane as a helical span at residues 574–594 (AAGITGLVLSILVLAAAAALL). Residues 595 to 734 (HYARARRKPG…VPRVLLASDH (140 aa)) lie on the Cytoplasmic side of the membrane. The segment at 603-655 (PGGLSATGTSSHSPSECQEPSSSRPSRIDPQEPTHSKPLAPMELEPMYSNVNP) is disordered. Residues 608 to 627 (ATGTSSHSPSECQEPSSSRP) show a composition bias toward polar residues. Over residues 628–637 (SRIDPQEPTH) the composition is skewed to basic and acidic residues. 4 short sequence motifs (ITIM motif) span residues 648–653 (PMYSNV), 660–665 (PIYSQI), 690–695 (VLYSEL), and 720–725 (ENYENV). Phosphotyrosine occurs at positions 650, 662, 692, and 722. The segment at 695-734 (LKKTHPDDSAGEASSRGRAHEEDDEENYENVPRVLLASDH) is disordered.

As to quaternary structure, interacts (via phosphorylated ITIM motifs) with phosphatases INPP5D, PTPN6 and PTPN11. Interacts (via ITIM motifs) SYK and ZAP70. Interacts with IZUMO1R/JUNO. Interacts (via extracellular domain) with IZUMO1; the interaction replaces IZUMO1R/JUNO as IZUMO1 receptor after adhesion between sperm and egg. Post-translationally, phosphorylated on cytoplasmic tyrosines; required for interaction with protein tyrosine phosphatases and protein tyrosine kinases. As to expression, primarily expressed in secondary lymphoid tissues by mature subsets of B-cells. Low expression on transitional B cells which increases to higher surface expression on mature and memory B-cells with innate-like features (at protein level). Expressed a low levels in naive and germinal center B-cells but also expressed in NK cells (at protein level). Expressed in unfertilized oocytes (at protein level). Expressed in a population of thymically derived naturally occurring regulatory T-cells that exhibits a memory phenotype, specialized in suppressing immune response to self-antigens. Detected in spleen, lymph node, peripheral blood lymphocytes, thymus, bone marrow, kidney, salivary gland, adrenal gland and uterus.

It localises to the cell membrane. The protein resides in the cell projection. It is found in the microvillus membrane. Promotes TLR9-induced B-cell proliferation, activation and survival but inhibits antibody production and suppresses plasma cell differentiation. Enhances activation of NF-kappa-B and MAPK signaling pathways in TLR9 stimulated B-cells. Has inhibitory potentional on B-cell receptor (BCR)-mediated signaling, possibly through association with SH2 domain-containing phosphatases. Inhibits cell tyrosine phosphorylation, calcium mobilization and activation-induced cell death induced through BCR signaling. Regulatory T-cells expressing FCRL3 exhibit a memory phenotype, are relatively nonresponsive to antigenic stimulation in presence of IL2 and have reduced capacity to suppress the proliferation of effector T-cells. Acts as a human-specific epitope on the cell surface of oocytes (oolemma) and plays a role during sperm-egg adhesion and fusion. Interacts with the IZUMO1-IZUMO1R/JUNO sperm-egg complex and replaces IZUMO1R/JUNO as IZUMO1 receptor during fertilization, thereby permitting species-specific gamete fusion. The chain is Fc receptor-like protein 3 from Homo sapiens (Human).